The primary structure comprises 110 residues: Secreted Ly-6/uPAR-related protein 1 (110 aa).

The N-terminal stretch at Met-1–Ala-22 is a signal peptide. Positions Arg-24–Cys-73 constitute a UPAR/Ly6 domain. Cystine bridges form between Cys-25-Cys-50, Cys-28-Cys-37, Cys-43-Cys-73, Cys-77-Cys-93, and Cys-94-Cys-99.

Homodimer. Interacts with PLAU. Interacts with CHRNA7. As to expression, expressed in skin, eye, whole lung, trachea, esophagus and stomach. Widely expressed in various tissues including spleen and thymus but not pancreas. Expressed in macrophages, dendritic cells, T and B cells. Expressed in lung specifically in ciliated bronchial epithelial cells (at protein level). Expression is decreased in lungs of asthmatic model mice. Expressed in the cornea.

The protein localises to the secreted. Has an antitumor activity. Was found to be a marker of late differentiation of the skin. Implicated in maintaining the physiological and structural integrity of the keratinocyte layers of the skin. In vitro down-regulates keratinocyte proliferation; the function may involve the proposed role as modulator of nicotinic acetylcholine receptors (nAChRs) activity. In vitro inhibits alpha-7-dependent nAChR currents in an allosteric manner. In T cells may be involved in regulation of intracellular Ca(2+) signaling. Seems to have a immunomodulatory function in the cornea. The function may implicate a possible role as a scavenger receptor for PLAU thereby blocking PLAU-dependent functions of PLAUR such as in cell migration and proliferation. This Mus musculus (Mouse) protein is Secreted Ly-6/uPAR-related protein 1 (Slurp1).